The following is a 463-amino-acid chain: L-seryl-tRNA(Sec) selenium transferase (463 aa).

K295 carries the post-translational modification N6-(pyridoxal phosphate)lysine.

The protein belongs to the SelA family. Homodecamer; pentamer of dimers. Binds only one seryl-tRNA(Sec) per dimer. Pyridoxal 5'-phosphate serves as cofactor.

It localises to the cytoplasm. It catalyses the reaction L-seryl-tRNA(Sec) + selenophosphate + H(+) = L-selenocysteinyl-tRNA(Sec) + phosphate. It participates in aminoacyl-tRNA biosynthesis; selenocysteinyl-tRNA(Sec) biosynthesis; selenocysteinyl-tRNA(Sec) from L-seryl-tRNA(Sec) (bacterial route): step 1/1. Its function is as follows. Converts seryl-tRNA(Sec) to selenocysteinyl-tRNA(Sec) required for selenoprotein biosynthesis. This chain is L-seryl-tRNA(Sec) selenium transferase, found in Salmonella schwarzengrund (strain CVM19633).